The chain runs to 506 residues: ATP synthase subunit alpha (506 aa).

Glycine 170–threonine 177 is an ATP binding site.

The protein belongs to the ATPase alpha/beta chains family. As to quaternary structure, F-type ATPases have 2 components, CF(1) - the catalytic core - and CF(0) - the membrane proton channel. CF(1) has five subunits: alpha(3), beta(3), gamma(1), delta(1), epsilon(1). CF(0) has four main subunits: a(1), b(1), b'(1) and c(9-12).

It is found in the cellular thylakoid membrane. It catalyses the reaction ATP + H2O + 4 H(+)(in) = ADP + phosphate + 5 H(+)(out). Produces ATP from ADP in the presence of a proton gradient across the membrane. The alpha chain is a regulatory subunit. This Synechococcus sp. (strain WH7803) protein is ATP synthase subunit alpha.